We begin with the raw amino-acid sequence, 77 residues long: Small ribosomal subunit protein bS18 (77 aa).

This sequence belongs to the bacterial ribosomal protein bS18 family. As to quaternary structure, part of the 30S ribosomal subunit. Forms a tight heterodimer with protein bS6.

Binds as a heterodimer with protein bS6 to the central domain of the 16S rRNA, where it helps stabilize the platform of the 30S subunit. The protein is Small ribosomal subunit protein bS18 of Lactobacillus helveticus (strain DPC 4571).